Here is a 436-residue protein sequence, read N- to C-terminus: UDP-N-acetylmuramate--L-alanine ligase (436 aa).

110–116 (GAHGKTS) contributes to the ATP binding site.

It belongs to the MurCDEF family.

It is found in the cytoplasm. It catalyses the reaction UDP-N-acetyl-alpha-D-muramate + L-alanine + ATP = UDP-N-acetyl-alpha-D-muramoyl-L-alanine + ADP + phosphate + H(+). The protein operates within cell wall biogenesis; peptidoglycan biosynthesis. Functionally, cell wall formation. This Lacticaseibacillus paracasei (strain ATCC 334 / BCRC 17002 / CCUG 31169 / CIP 107868 / KCTC 3260 / NRRL B-441) (Lactobacillus paracasei) protein is UDP-N-acetylmuramate--L-alanine ligase.